Consider the following 346-residue polypeptide: T-box protein 12 (346 aa).

Acidic residues predominate over residues 33 to 48 (DEEDVEVDVEDVDDVD). Residues 33–66 (DEEDVEVDVEDVDDVDLSSIPSKSPERSRGRPKI) are disordered. A DNA-binding region (T-box) is located at residues 86-268 (LWAKFFDLGT…KNPFAKGFRD (183 aa)).

The protein resides in the nucleus. In terms of biological role, transcription factor. Involved in cell fate determination; required to pattern the posterior hindgut. Involved in motor neuron fate determination and maintenance, acting as a transcriptional repressor to counteract gene activation by transcription factor unc-3 in a subset of motor neurons. Required throughout development to repress transcription by unc-3, probably acting by binding to specific promoter elements. Represses expression of VA and VB motor neuron-specific effector genes, such as DEG/ENaC channel del-1 and the innexin inx-12, in DA and DB motor neurons. Represses expression of transcription factor bnc-1, perhaps acting directly, in DA and DB motor neurons. The polypeptide is T-box protein 12 (mab-9) (Caenorhabditis elegans).